The sequence spans 102 residues: A-type ATP synthase subunit F (102 aa).

The protein belongs to the V-ATPase F subunit family. As to quaternary structure, has multiple subunits with at least A(3), B(3), C, D, E, F, H, I and proteolipid K(x).

It is found in the cell membrane. Functionally, component of the A-type ATP synthase that produces ATP from ADP in the presence of a proton gradient across the membrane. The polypeptide is A-type ATP synthase subunit F (Thermococcus onnurineus (strain NA1)).